The sequence spans 66 residues: Light-harvesting protein B-800-850 alpha chain B (66 aa).

Over 1 to 11 (MNQGRIWTVVN) the chain is Cytoplasmic. The helical transmembrane segment at 12-35 (PGVGLPLLLGSVTVIAILVHYAVL) threads the bilayer. An a bacteriochlorophyll-binding site is contributed by H31. The Periplasmic segment spans residues 36 to 66 (SNTTWFPKYWNGATVAAPAAAPAPAAPAAKK).

Belongs to the antenna complex alpha subunit family. The core complex is formed by different alpha and beta chains, binding bacteriochlorophyll molecules, and arranged most probably in tetrameric structures disposed around the reaction center. The non-pigmented gamma chains may constitute additional components.

The protein resides in the cell inner membrane. Functionally, antenna complexes are light-harvesting systems, which transfer the excitation energy to the reaction centers. The chain is Light-harvesting protein B-800-850 alpha chain B (pucAB) from Rhodopseudomonas palustris (strain ATCC BAA-98 / CGA009).